A 257-amino-acid polypeptide reads, in one-letter code: Small ribosomal subunit protein uS15m (257 aa).

The N-terminal 57 residues, 1-57, are a transit peptide targeting the mitochondrion; the sequence is MLRVAWRTLSLIRTRAVTQVLVPGLPGGGSAKFPFNQWGLQPRSLLLQAARGYVVRK. Residues 225-257 form a disordered region; sequence RALKAAAAAQKQAKRRNPDSPAKAIPKTLKDSQ.

This sequence belongs to the universal ribosomal protein uS15 family. Component of the mitochondrial small ribosomal subunit (mt-SSU). Mature mammalian 55S mitochondrial ribosomes consist of a small (28S) and a large (39S) subunit. The 28S small subunit contains a 12S ribosomal RNA (12S mt-rRNA) and 30 different proteins. The 39S large subunit contains a 16S rRNA (16S mt-rRNA), a copy of mitochondrial valine transfer RNA (mt-tRNA(Val)), which plays an integral structural role, and 52 different proteins. Interacts with METTL17.

The protein localises to the mitochondrion matrix. The chain is Small ribosomal subunit protein uS15m (MRPS15) from Homo sapiens (Human).